Reading from the N-terminus, the 178-residue chain is Redox-sensing transcriptional repressor Rex (178 aa).

59 to 64 (GVGNMG) is an NAD(+) binding site.

The protein belongs to the transcriptional regulatory Rex family. In terms of assembly, homodimer.

It localises to the cytoplasm. Modulates transcription in response to changes in cellular NADH/NAD(+) redox state. This Streptococcus suis protein is Redox-sensing transcriptional repressor Rex.